We begin with the raw amino-acid sequence, 252 residues long: ATP synthase subunit a (252 aa).

The next 6 helical transmembrane spans lie at 29–49 (FTNV…FLFI), 87–107 (FFPL…IGLF), 116–136 (QIMI…GYGF), 146–166 (LFVP…IEVI), 183–205 (MLAG…ELGI), and 219–239 (VAIT…FTVL).

It belongs to the ATPase A chain family. F-type ATPases have 2 components, CF(1) - the catalytic core - and CF(0) - the membrane proton channel. CF(1) has five subunits: alpha(3), beta(3), gamma(1), delta(1), epsilon(1). CF(0) has three main subunits: a(1), b(2) and c(9-12). The alpha and beta chains form an alternating ring which encloses part of the gamma chain. CF(1) is attached to CF(0) by a central stalk formed by the gamma and epsilon chains, while a peripheral stalk is formed by the delta and b chains.

It is found in the cell inner membrane. Key component of the proton channel; it plays a direct role in the translocation of protons across the membrane. The sequence is that of ATP synthase subunit a from Bartonella quintana (strain Toulouse) (Rochalimaea quintana).